Here is a 435-residue protein sequence, read N- to C-terminus: 3-phosphoshikimate 1-carboxyvinyltransferase (435 aa).

Residues Lys23, Ser24, and Arg28 each contribute to the 3-phosphoshikimate site. Lys23 is a binding site for phosphoenolpyruvate. 2 residues coordinate phosphoenolpyruvate: Gly96 and Arg124. Residues Ser167, Ser168, Gln169, Ser196, Glu311, and His340 each coordinate 3-phosphoshikimate. Gln169 is a phosphoenolpyruvate binding site. Glu311 acts as the Proton acceptor in catalysis. 3 residues coordinate phosphoenolpyruvate: Arg344, Arg385, and Lys410.

It belongs to the EPSP synthase family. Monomer.

It is found in the cytoplasm. The catalysed reaction is 3-phosphoshikimate + phosphoenolpyruvate = 5-O-(1-carboxyvinyl)-3-phosphoshikimate + phosphate. Its pathway is metabolic intermediate biosynthesis; chorismate biosynthesis; chorismate from D-erythrose 4-phosphate and phosphoenolpyruvate: step 6/7. Functionally, catalyzes the transfer of the enolpyruvyl moiety of phosphoenolpyruvate (PEP) to the 5-hydroxyl of shikimate-3-phosphate (S3P) to produce enolpyruvyl shikimate-3-phosphate and inorganic phosphate. The protein is 3-phosphoshikimate 1-carboxyvinyltransferase of Mycolicibacterium paratuberculosis (strain ATCC BAA-968 / K-10) (Mycobacterium paratuberculosis).